The sequence spans 496 residues: Acetyl-coenzyme A carboxylase carboxyl transferase subunit beta, chloroplastic (496 aa).

Residues 229-496 enclose the CoA carboxyltransferase N-terminal domain; that stretch reads LWVQCENCYG…FFPLNKNFIK (268 aa). Positions 233, 236, 252, and 255 each coordinate Zn(2+). The C4-type zinc-finger motif lies at 233-255; sequence CENCYGLNYKKFFRLKLHICEQC.

Belongs to the AccD/PCCB family. As to quaternary structure, acetyl-CoA carboxylase is a heterohexamer composed of biotin carboxyl carrier protein, biotin carboxylase and 2 subunits each of ACCase subunit alpha and ACCase plastid-coded subunit beta (accD). The cofactor is Zn(2+).

The protein resides in the plastid. The protein localises to the chloroplast stroma. It carries out the reaction N(6)-carboxybiotinyl-L-lysyl-[protein] + acetyl-CoA = N(6)-biotinyl-L-lysyl-[protein] + malonyl-CoA. It functions in the pathway lipid metabolism; malonyl-CoA biosynthesis; malonyl-CoA from acetyl-CoA: step 1/1. Its function is as follows. Component of the acetyl coenzyme A carboxylase (ACC) complex. Biotin carboxylase (BC) catalyzes the carboxylation of biotin on its carrier protein (BCCP) and then the CO(2) group is transferred by the transcarboxylase to acetyl-CoA to form malonyl-CoA. This chain is Acetyl-coenzyme A carboxylase carboxyl transferase subunit beta, chloroplastic, found in Ranunculus macranthus (Large buttercup).